We begin with the raw amino-acid sequence, 280 residues long: MSVLETKLKSQMSKSAKIARNMNKLPDEIDRLRKRIERINKKRKPTSSNIRDLEKSNKQLVTKQQKLADLQVEYTKIEKKINETKINLQKEQSRNQKKLSSMLDKNTKGNEEIMEKLLTNSDQINEISNQIKKAVNQKEIIEYDVFLSHSSLDKEDYVSKISEKLIEKGLKVFEDVKVFEIGKSQTETMNMGILNSRFVVVFLSPNFIESGWSRYEFLSFLNREINEEHVIILPIWHKVSVEDVRAYNPYLVDKYALNTSDFSIEEIVEKIYQVIVNSKN.

Residues 22–94 (MNKLPDEIDR…KINLQKEQSR (73 aa)) adopt a coiled-coil conformation. In terms of domain architecture, TIR spans 141 to 275 (IEYDVFLSHS…EIVEKIYQVI (135 aa)). Residues 150–151 (SS) and Glu-180 contribute to the NAD(+) site. Glu-216 is a catalytic residue.

Its subcellular location is the secreted. It catalyses the reaction NAD(+) + H2O = ADP-D-ribose + nicotinamide + H(+). The catalysed reaction is NADP(+) + H2O = ADP-D-ribose 2'-phosphate + nicotinamide + H(+). Its function is as follows. Virulence factor that suppresses host Toll-like receptor 2 (TLR2)-mediated NF-kappa-B signaling upon infection. NAD(+) hydrolase (NADase) that catalyzes cleavage of NAD(+) into ADP-D-ribose (ADPR) and nicotinamide. Also able to hydrolyze NADP(+), but not other NAD(+)-related molecules. Able to reduce NAD(+) levels in host cells. This Staphylococcus aureus (strain MSSA476) protein is NAD(+) hydrolase TirS.